Consider the following 1416-residue polypeptide: Tiny macrocysts protein B (1416 aa).

Transmembrane regions (helical) follow at residues 47 to 67 (ILTI…GFKH), 93 to 113 (FGYL…ILGF), 140 to 160 (FVSF…LIGL), 185 to 205 (ANLP…IVAF), 231 to 251 (VTVL…DFVP), 253 to 273 (LTSI…IIVL), 285 to 305 (SGFY…MGIN), and 315 to 335 (ITIV…MFYF). A compositionally biased stretch (basic and acidic residues) spans 356-372 (LKDANKKGKRNSVEKES). Disordered regions lie at residues 356-377 (LKDA…PTSK) and 662-691 (IEKS…RRGK). 2 helical membrane passes run 706–726 (WLMI…LVVF) and 953–973 (AILY…AVLF). 2 disordered regions span residues 1018-1103 (RDNL…RPLM) and 1119-1144 (NVRL…ATRT). Residues 1024-1039 (TTDDDGRDDHLGEDDN) show a composition bias toward acidic residues. Composition is skewed to low complexity over residues 1048-1062 (NNNN…NNNN) and 1083-1094 (SSSGSNVLNTSS). The span at 1123–1144 (QAKDEEITNGGGERKGSDATRT) shows a compositional bias: basic and acidic residues. The next 3 helical transmembrane spans lie at 1179–1199 (ILAT…TFTV), 1325–1345 (WFLA…FTYF), and 1358–1378 (VLTA…VVLF).

The protein localises to the membrane. Its function is as follows. Regulator of the cAMP signaling pathway specific to sexual development. Controls the levels of external cAMP by regulating the expression of phosphodiesterase pdsA and its inhibitor pdiA. The sequence is that of Tiny macrocysts protein B (tmcB) from Dictyostelium discoideum (Social amoeba).